Reading from the N-terminus, the 260-residue chain is Acetylglutamate kinase (260 aa).

Residues 46–47 (GG), Arg68, and Asn160 contribute to the substrate site.

It belongs to the acetylglutamate kinase family. ArgB subfamily.

Its subcellular location is the cytoplasm. The catalysed reaction is N-acetyl-L-glutamate + ATP = N-acetyl-L-glutamyl 5-phosphate + ADP. The protein operates within amino-acid biosynthesis; L-arginine biosynthesis; N(2)-acetyl-L-ornithine from L-glutamate: step 2/4. Its function is as follows. Catalyzes the ATP-dependent phosphorylation of N-acetyl-L-glutamate. This chain is Acetylglutamate kinase, found in Shewanella sp. (strain W3-18-1).